Here is a 103-residue protein sequence, read N- to C-terminus: Large ribosomal subunit protein eL14 (103 aa).

Belongs to the eukaryotic ribosomal protein eL14 family.

The protein is Large ribosomal subunit protein eL14 of Pyrobaculum arsenaticum (strain DSM 13514 / JCM 11321 / PZ6).